The primary structure comprises 116 residues: uncharacterized protein (116 aa).

This is an uncharacterized protein from Saccharomyces cerevisiae (strain ATCC 204508 / S288c) (Baker's yeast).